The following is a 205-amino-acid chain: N-(5'-phosphoribosyl)anthranilate isomerase (205 aa).

The protein belongs to the TrpF family.

The enzyme catalyses N-(5-phospho-beta-D-ribosyl)anthranilate = 1-(2-carboxyphenylamino)-1-deoxy-D-ribulose 5-phosphate. The protein operates within amino-acid biosynthesis; L-tryptophan biosynthesis; L-tryptophan from chorismate: step 3/5. The sequence is that of N-(5'-phosphoribosyl)anthranilate isomerase from Maridesulfovibrio salexigens (strain ATCC 14822 / DSM 2638 / NCIMB 8403 / VKM B-1763) (Desulfovibrio salexigens).